The primary structure comprises 412 residues: Alpha-1-antiproteinase (412 aa).

Positions 1-24 are cleaved as a signal peptide; that stretch reads MPSSISWGLLLLAGLCCLAPGSLA. Position 33 is a phosphoserine (S33). 4 N-linked (GlcNAc...) asparagine glycosylation sites follow: N65, N102, N165, and N266. Positions 368–387 are RCL; the sequence is GVTVLEAIPMSLPPDVRFDR. S378 carries the post-translational modification Phosphoserine.

It belongs to the serpin family. As to quaternary structure, interacts with CELA2A. Interacts with ERGIC3 and LMAN1/ERGIC53. Interacts with PRSS1/Trypsin. As to expression, plasma.

It is found in the secreted. Inhibitor of serine proteases. In Callosciurus caniceps (Gray-bellied squirrel), this protein is Alpha-1-antiproteinase.